Consider the following 75-residue polypeptide: Calhepatin (75 aa).

At Ser-1 the chain carries N-acetylserine. EF-hand domains lie at 2-37 (ADEQ…VHPK) and 38-73 (VSRN…LADL). The Ca(2+) site is built by Asp-15, Asp-17, Ser-19, Thr-21, Glu-26, Asp-51, Asn-53, Asp-55, Gln-57, and Glu-62.

Monomer and homodimer. As to expression, liver, and to a much lower level intestine.

In terms of biological role, binds both calcium and copper, but not zinc. May be involved in calcium signal transduction. This chain is Calhepatin, found in Lepidosiren paradoxus (South American lungfish).